The following is a 500-amino-acid chain: Sulfate adenylyltransferase (500 aa).

The N-terminal stretch occupies residues 1–165; the sequence is MLSPHGGILQ…LEAIQLPAHY (165 aa). The catalytic stretch occupies residues 166-390; the sequence is DYLNLRKSPA…LRQYNPPRYR (225 aa). Residue glutamine 193 participates in sulfate binding. Residues 193–196 and 287–290 each bind ATP; these read QTRN and GRDH. Residues threonine 194, arginine 195, and asparagine 196 contribute to the active site. Residue arginine 195 coordinates sulfate. Sulfate is bound at residue alanine 291. Isoleucine 329 provides a ligand contact to ATP. The required for oligomerization; adenylyl-sulfate kinase-like stretch occupies residues 391–500; the sequence is QGFVIVVNHE…FLEDNKFFQF (110 aa).

The protein belongs to the sulfate adenylyltransferase family. As to quaternary structure, homohexamer. Dimer of trimers.

It is found in the cytoplasm. It carries out the reaction sulfate + ATP + H(+) = adenosine 5'-phosphosulfate + diphosphate. Its pathway is sulfur metabolism; hydrogen sulfide biosynthesis; sulfite from sulfate: step 1/3. Catalyzes the first intracellular reaction of sulfate assimilation, forming adenosine-5'-phosphosulfate (APS) from inorganic sulfate and ATP. Plays an important role in sulfate activation as a component of the biosynthesis pathway of sulfur-containing amino acids. The sequence is that of Sulfate adenylyltransferase from Eremothecium gossypii (strain ATCC 10895 / CBS 109.51 / FGSC 9923 / NRRL Y-1056) (Yeast).